Reading from the N-terminus, the 599-residue chain is Pentatricopeptide repeat-containing protein At3g62540, mitochondrial (599 aa).

Residues methionine 1–valine 99 constitute a mitochondrion transit peptide. 10 PPR repeats span residues alanine 194–threonine 228, glutamate 230–isoleucine 262, glycine 263–arginine 293, asparagine 297–proline 331, aspartate 332–proline 366, asparagine 367–proline 401, aspartate 402–proline 436, aspartate 437–proline 471, serine 472–proline 506, and aspartate 507–threonine 541.

This sequence belongs to the PPR family. P subfamily.

The protein resides in the mitochondrion. This chain is Pentatricopeptide repeat-containing protein At3g62540, mitochondrial, found in Arabidopsis thaliana (Mouse-ear cress).